Consider the following 70-residue polypeptide: Probable protein transport protein Sec61 subunit gamma (70 aa).

Topologically, residues 1 to 33 are cytoplasmic; the sequence is MADNADDLFQIPKNFYKEGSHFIKRCVKPDRKE. A helical transmembrane segment spans residues 34–62; the sequence is FLSISKAVATGFVLMGLIGYIIKLIHIPI. Residues 63 to 70 are Extracellular-facing; it reads NKVLVGGA.

The protein belongs to the SecE/SEC61-gamma family. Heterotrimeric complex composed of SEC61-alpha, SEC61-beta and SEC61-gamma.

Its subcellular location is the endoplasmic reticulum membrane. In terms of biological role, necessary for protein translocation in the endoplasmic reticulum. This chain is Probable protein transport protein Sec61 subunit gamma (sss1), found in Schizosaccharomyces pombe (strain 972 / ATCC 24843) (Fission yeast).